The primary structure comprises 332 residues: Glycerol-3-phosphate dehydrogenase [NAD(P)+] (332 aa).

4 residues coordinate NADPH: Ser10, Trp11, Lys31, and Lys105. Sn-glycerol 3-phosphate is bound by residues Lys105, Gly136, and Ser138. Ala140 is a binding site for NADPH. Positions 191, 244, 254, 255, and 256 each coordinate sn-glycerol 3-phosphate. Lys191 acts as the Proton acceptor in catalysis. Residue Arg255 coordinates NADPH. Residues Val279 and Glu281 each contribute to the NADPH site.

This sequence belongs to the NAD-dependent glycerol-3-phosphate dehydrogenase family.

The protein resides in the cytoplasm. It carries out the reaction sn-glycerol 3-phosphate + NAD(+) = dihydroxyacetone phosphate + NADH + H(+). The enzyme catalyses sn-glycerol 3-phosphate + NADP(+) = dihydroxyacetone phosphate + NADPH + H(+). It participates in membrane lipid metabolism; glycerophospholipid metabolism. Catalyzes the reduction of the glycolytic intermediate dihydroxyacetone phosphate (DHAP) to sn-glycerol 3-phosphate (G3P), the key precursor for phospholipid synthesis. The sequence is that of Glycerol-3-phosphate dehydrogenase [NAD(P)+] from Anaeromyxobacter dehalogenans (strain 2CP-C).